We begin with the raw amino-acid sequence, 542 residues long: Propane 2-monooxygenase, hydroxylase component large subunit (542 aa).

Residues glutamate 97, glutamate 127, histidine 130, glutamate 192, glutamate 226, and histidine 229 each coordinate Fe cation.

It belongs to the TmoA/XamoA family. In terms of assembly, the propane 2-monooxygenase multicomponent enzyme system is composed of an electron transfer component and a monooxygenase component interacting with the effector protein MimD. The electron transfer component is composed of a reductase (MimB), and the monooxygenase component is formed by a large subunit (MimA) and a small subunit (MimC). Requires the presence of the chaperonin-like protein MimG to ensure a productive folding, resulting of a soluble MimA, which leads to the active form of MimABCD. Fe(2+) serves as cofactor.

It carries out the reaction propane + NADH + O2 + H(+) = propan-2-ol + NAD(+) + H2O. The catalysed reaction is acetone + NADH + O2 + H(+) = hydroxyacetone + NAD(+) + H2O. It catalyses the reaction butan-2-one + NADH + O2 + H(+) = 1-hydroxy-2-butanone + NAD(+) + H2O. The enzyme catalyses phenol + NADH + O2 + H(+) = hydroquinone + NAD(+) + H2O. Functionally, component of the propane 2-monooxygenase multicomponent enzyme system which is involved in the degradation of propane via the O2-dependent hydroxylation of propane. Also involved in the degradation of acetone via the O2-dependent hydroxylation of acetone. Also able to catalyze the oxidation of phenol, methylethylketone (2-butanone), 1-propanol and 2-propanol. The polypeptide is Propane 2-monooxygenase, hydroxylase component large subunit (Mycolicibacterium goodii (Mycobacterium goodii)).